Reading from the N-terminus, the 763-residue chain is MKEFEVKVASTAFVLVLFSLTINQILASETSTKFRSPVPAPTVPDWNHLPNEGNEENVVSAPKQDGASGGQKPYWTKREKMMKRLHAEPAGNTVRFRCAVDGNPKPQVLWYKNDLIVQKNDRVGGYKYRNQVLILESVVLSDKGNYMCVARNEYGSINHTYQLDVQERSASKPILAEGLPQNKSAYIGDDVTFKCKVYSDAHPHIQWLKSINNHNNAAPNYTVLKAAGVNTTDLDMEVLILKNVSFEEAGEYTCLAGNSIGISHQSAWLSVLPVPPPTTDTITKGIPNETNIIIYVMCGVLVILFGLAVVLVLYYHCYNGKDPPMLVRIENPDNIPPMTKIEHPTMLFGNTQAWQRMCMPMQEPFEFNIQLDLQWELQREDITLVERLDEGFFGQVFKADLVTCNNTRKEKMVCAVKMLKGNRNEKDVLDLLTEMDQMKRVGKHKNIINLLGVCTQNGPLWLVIEYAAQGNLRDYLRRNRPQNTLCNLVLPSEGRNPDDELPVPHGDTLTQKDIVSFAFQVARGLEFLAQKKCIHRDLAARNVLVTEELVMKIADFGLARDIRSCDYYRKHTRGHLPYKWMALEAMSDNIFTHATDVWSFGVLLWEIFSLAGSPYPGIKTHELVKFLRSGERLDKPQYASQEMYRLMRDCWEEDPSKRPNFRTLVEDLDRMLAESSTEVYIDFAAGCEAEYSESSEDESESQNSDEEDDDSVFERMRQIDSLSNGNIPFNEEDSSNSDPYVAPLLQNEENVLQNEHARLRSEA.

A signal peptide spans 1–27; it reads MKEFEVKVASTAFVLVLFSLTINQILA. The Extracellular portion of the chain corresponds to 28–291; the sequence is SETSTKFRSP…ITKGIPNETN (264 aa). Positions 34 to 74 are disordered; sequence FRSPVPAPTVPDWNHLPNEGNEENVVSAPKQDGASGGQKPY. 2 consecutive Ig-like C2-type domains span residues 73–164 and 173–270; these read PYWT…YQLD and PILA…AWLS. A disulfide bridge links Cys-98 with Cys-148. N-linked (GlcNAc...) asparagine glycans are attached at residues Asn-158, Asn-182, Asn-220, Asn-230, Asn-243, and Asn-288. Cys-195 and Cys-254 are disulfide-bonded. A helical membrane pass occupies residues 292 to 312; that stretch reads IIIYVMCGVLVILFGLAVVLV. Residues 313 to 763 are Cytoplasmic-facing; the sequence is LYYHCYNGKD…NEHARLRSEA (451 aa). A Protein kinase domain is found at 382–672; it reads ITLVERLDEG…TLVEDLDRML (291 aa). Residues 388 to 396 and Lys-417 contribute to the ATP site; that span reads LDEGFFGQV. The active-site Proton acceptor is the Asp-537. Tyr-568 carries the post-translational modification Phosphotyrosine; by autocatalysis. The span at 691–711 shows a compositional bias: acidic residues; it reads YSESSEDESESQNSDEEDDDS. The interval 691 to 742 is disordered; the sequence is YSESSEDESESQNSDEEDDDSVFERMRQIDSLSNGNIPFNEEDSSNSDPYVA.

It belongs to the protein kinase superfamily. Tyr protein kinase family. Fibroblast growth factor receptor subfamily.

It localises to the membrane. It catalyses the reaction L-tyrosyl-[protein] + ATP = O-phospho-L-tyrosyl-[protein] + ADP + H(+). In terms of biological role, receptor for basic fibroblast growth factor. This chain is Fibroblast growth factor receptor (FGFR), found in Halocynthia roretzi (Sea squirt).